We begin with the raw amino-acid sequence, 469 residues long: Cysteine protease ATG4 (469 aa).

The interval 48-99 is disordered; it reads KNIKADDHHPQTPPSVLKAETETQEAHDTAQPPNPPTNAPDTPPDSISSSFS. Positions 66-75 are enriched in basic and acidic residues; that stretch reads AETETQEAHD. Over residues 79–90 the composition is skewed to pro residues; the sequence is PPNPPTNAPDTP. Residue Cys-172 is the Nucleophile of the active site. Catalysis depends on residues Asp-362 and His-364. The segment at 443–469 is disordered; the sequence is GSSEGRESAIDEVETLSDDDTDTIHEA. The segment covering 452–463 has biased composition (acidic residues); the sequence is IDEVETLSDDDT.

It belongs to the peptidase C54 family. As to quaternary structure, interacts with ATG8.

The protein localises to the cytoplasm. Its subcellular location is the nucleus. It localises to the preautophagosomal structure. The catalysed reaction is [protein]-C-terminal L-amino acid-glycyl-phosphatidylethanolamide + H2O = [protein]-C-terminal L-amino acid-glycine + a 1,2-diacyl-sn-glycero-3-phosphoethanolamine. Cysteine protease that plays a key role in cytoplasm to vacuole transport (Cvt) and autophagy by mediating both proteolytic activation and delipidation of ATG8. Required for selective autophagic degradation of the nucleus (nucleophagy) as well as for mitophagy which contributes to regulate mitochondrial quantity and quality by eliminating the mitochondria to a basal level to fulfill cellular energy requirements and preventing excess ROS production. The protease activity is required for proteolytic activation of ATG8: cleaves the C-terminal amino acid of ATG8 to reveal a C-terminal glycine. ATG8 ubiquitin-like activity requires the exposure of the glycine at the C-terminus for its conjugation to phosphatidylethanolamine (PE) and its insertion to membranes, which is necessary for autophagy. The ATG8-PE conjugate mediates tethering between adjacent membranes and stimulates membrane hemifusion, leading to expansion of the autophagosomal membrane during autophagy. In addition to the protease activity, also catalyzes deconjugation of PE-conjugated forms of ATG8 during macroautophagy: ATG8 delipidation is required to release the protein from membranes, which facilitates multiple events during macroautophagy, and especially for efficient autophagosome biogenesis, the assembly of ATG9-containing tubulovesicular clusters into phagophores/autophagosomes, and for the disassembly of PAS-associated ATG components. ATG8 delipidation by ATG4 also recycles ATG8-PE generated on inappropriate membranes to maintain a reservoir of unlipidated ATG8 that is required for autophagosome formation at the PAS. Autophagy is required for proper vegetative growth, asexual/sexual reproduction, and full virulence. Autophagy is particularly involved in the biosynthesis of deoxynivalenol (DON), an important virulence determinant. The chain is Cysteine protease ATG4 from Gibberella zeae (strain ATCC MYA-4620 / CBS 123657 / FGSC 9075 / NRRL 31084 / PH-1) (Wheat head blight fungus).